Here is a 247-residue protein sequence, read N- to C-terminus: DNA polymerase sliding clamp (247 aa).

The protein belongs to the PCNA family. Homotrimer. The subunits circularize to form a toroid; DNA passes through its center. Replication factor C (RFC) is required to load the toroid on the DNA.

In terms of biological role, sliding clamp subunit that acts as a moving platform for DNA processing. Responsible for tethering the catalytic subunit of DNA polymerase and other proteins to DNA during high-speed replication. This is DNA polymerase sliding clamp from Methanoculleus marisnigri (strain ATCC 35101 / DSM 1498 / JR1).